A 938-amino-acid chain; its full sequence is Glutamate receptor ionotropic, NMDA 1 (938 aa).

A signal peptide spans 1–18 (MSTMRLLTLALLFSCSVA). The Extracellular portion of the chain corresponds to 19–559 (RAACDPKIVN…TLDSFMQPFQ (541 aa)). N-linked (GlcNAc...) asparagine glycosylation is found at Asn61, Asn203, Asn239, Asn276, Asn300, Asn350, Asn368, Asn440, Asn471, and Asn491. A disulfide bond links Cys79 and Cys308. 2 cysteine pairs are disulfide-bonded: Cys420/Cys454 and Cys436/Cys455. Glycine-binding residues include Pro516, Thr518, and Arg523. A helical membrane pass occupies residues 560–580 (STLWLLVGLSVHVVAVMLYLL). Residues 581–604 (DRFSPFGRFKVNSEEEEEDALTLS) lie on the Cytoplasmic side of the membrane. Positions 603–624 (LSSAMWFSWGVLLNSGIGEGAP) are pore-forming. Positions 605 to 615 (SAMWFSWGVLL) form an intramembrane region, discontinuously helical. Residues 616–627 (NSGIGEGAPRSF) lie on the Cytoplasmic side of the membrane. The chain crosses the membrane as a helical span at residues 628-648 (SARILGMVWAGFAMIIVASYT). Residues 649 to 811 (ANLAAFLVLD…SNAPATLTFE (163 aa)) are Extracellular-facing. A glycan (N-linked (GlcNAc...) asparagine) is linked at Asn674. Residues Ser688 and Asp732 each contribute to the glycine site. Cys744 and Cys798 are oxidised to a cystine. N-linked (GlcNAc...) asparagine glycosylation is present at Asn771. A helical transmembrane segment spans residues 812 to 835 (NMAGVFMLVAGGIVAGIFLIFIEI). At 836–938 (AYKRHKDARR…LQLCSRHRES (103 aa)) the chain is on the cytoplasmic side. A phosphoserine; by PKC mark is found at Ser889, Ser890, Ser896, and Ser897. The disordered stretch occupies residues 889–938 (SSFKRRRSSKDTSTGGGRGALQNQKDTVLPRRAIEREEGQLQLCSRHRES). Residues 916-927 (VLPRRAIEREEG) show a composition bias toward basic and acidic residues.

The protein belongs to the glutamate-gated ion channel (TC 1.A.10.1) family. NR1/GRIN1 subfamily. As to quaternary structure, heterotetramer; the NMDAR subunits are modular and harbor tiered domains that function in concert to regulate opening and closing of the cation-selective ion channel pore. Forms heterotetrameric channels composed of two GluN1/zeta subunits (GRIN1), and two identical GluN2/epsilon subunits (GRIN2A, GRIN2B, GRIN2C or GRIN2D) or GluN3 subunits (GRIN3A or GRIN3B) (in vitro). Can also form heterotetrameric channels that contain at least two GluN1 subunits and at least two different GluN2 subunits (or a combination of one GluN2 and one GluN3 subunits) (in vitro). In vivo, the subunit composition may vary in function of the expression levels of the different subunits. Found in a complex with GRIN2A or GRIN2B, GRIN3A and PPP2CB. Found in a complex with GRIN2A or GRIN2B and GRIN3B. Interacts with SNX27 (via PDZ domain); the interaction is required for recycling to the plasma membrane when endocytosed and prevent degradation in lysosomes. Interacts with DLG4 and MPDZ. Interacts with LRFN1 and LRFN2. Interacts with MYZAP. Found in a complex with DLG4 and PRR7. Found in a complex with GRIN2B and PRR7. Interacts with PRR7; the interaction is reduced following NMDA receptor activity. NMDA is probably regulated by C-terminal phosphorylation of an isoform of GRIN1 by PKC. Dephosphorylated on Ser-897 probably by protein phosphatase 2A (PPP2CB). Its phosphorylated state is influenced by the formation of the NMDAR-PPP2CB complex and the NMDAR channel activity.

It is found in the cell membrane. It localises to the postsynaptic cell membrane. The protein localises to the postsynaptic density membrane. Its subcellular location is the synaptic cell membrane. It catalyses the reaction Ca(2+)(in) = Ca(2+)(out). The enzyme catalyses Na(+)(in) = Na(+)(out). The catalysed reaction is K(+)(in) = K(+)(out). NMDA glutamate receptor activity is inhbited by Mg2(+) in a voltage-dependent manner; Mg2(+)-induced blockade occurs only at negative potentials and decreases with membrane depolarization. 7-chlorokynurenate (50 uM) or Zn2(+) (100 uM) partially inhibit the NMDA glutamate receptor activity, while acide 2-amino-5-phosphonovalerique(100 uM) almost completely blocked the NMDA glutamate receptor activity. Dizocilpine (1 uM) results in long lasting and almost complete block of the NMDA glutamate receptor activity. Its function is as follows. Component of N-methyl-D-aspartate (NMDA) receptors (NMDARs) that function as heterotetrameric, ligand-gated cation channels with high calcium permeability and voltage-dependent block by Mg(2+). NMDARs participate in synaptic plasticity for learning and memory formation by contributing to the long-term potentiation (LTP). Channel activation requires binding of the neurotransmitter L-glutamate to the GluN2 subunit, glycine or D-serine binding to the GluN1 subunit, plus membrane depolarization to eliminate channel inhibition by Mg(2+). NMDARs mediate simultaneously the potasium efflux and the influx of calcium and sodium. Each GluN2 or GluN3 subunit confers differential attributes to channel properties, including activation, deactivation and desensitization kinetics, pH sensitivity, Ca2(+) permeability, and binding to allosteric modulators. The sequence is that of Glutamate receptor ionotropic, NMDA 1 from Homo sapiens (Human).